The chain runs to 307 residues: Oxygen-dependent coproporphyrinogen-III oxidase (307 aa).

Ser-99 lines the substrate pocket. Residues His-103 and His-113 each contribute to the a divalent metal cation site. His-113 serves as the catalytic Proton donor. 115–117 (NVR) lines the substrate pocket. Residues His-152 and His-182 each coordinate a divalent metal cation. The tract at residues 247–282 (YVEFNLVFDRGTLFGLQSGGRTESILMSMPPVANWR) is important for dimerization. 265 to 267 (GGR) serves as a coordination point for substrate.

It belongs to the aerobic coproporphyrinogen-III oxidase family. Homodimer. The cofactor is a divalent metal cation.

The protein localises to the cytoplasm. The catalysed reaction is coproporphyrinogen III + O2 + 2 H(+) = protoporphyrinogen IX + 2 CO2 + 2 H2O. The protein operates within porphyrin-containing compound metabolism; protoporphyrin-IX biosynthesis; protoporphyrinogen-IX from coproporphyrinogen-III (O2 route): step 1/1. Functionally, involved in the heme biosynthesis. Catalyzes the aerobic oxidative decarboxylation of propionate groups of rings A and B of coproporphyrinogen-III to yield the vinyl groups in protoporphyrinogen-IX. This Burkholderia orbicola (strain MC0-3) protein is Oxygen-dependent coproporphyrinogen-III oxidase.